Here is a 119-residue protein sequence, read N- to C-terminus: Beta-2-microglobulin (119 aa).

The signal sequence occupies residues 1–20 (MARFVVVPLLVLLSLFGLEA). Residues 25–114 (PKIQVYSRYP…VTFSTPKTVK (90 aa)) enclose the Ig-like C1-type domain. Cys45 and Cys100 form a disulfide bridge.

The protein belongs to the beta-2-microglobulin family. As to quaternary structure, heterodimer of an alpha chain and a beta chain. Beta-2-microglobulin is the beta-chain of major histocompatibility complex class I molecules.

The protein resides in the secreted. Functionally, component of the class I major histocompatibility complex (MHC). Involved in the presentation of peptide antigens to the immune system. The polypeptide is Beta-2-microglobulin (B2M) (Saguinus bicolor bicolor (Pied bare-faced tamarin)).